The primary structure comprises 263 residues: Hydroxyethylthiazole kinase (263 aa).

Residue Met-41 coordinates substrate. Residues Arg-117 and Thr-163 each contribute to the ATP site. Gly-190 contacts substrate.

It belongs to the Thz kinase family. It depends on Mg(2+) as a cofactor.

It catalyses the reaction 5-(2-hydroxyethyl)-4-methylthiazole + ATP = 4-methyl-5-(2-phosphooxyethyl)-thiazole + ADP + H(+). It functions in the pathway cofactor biosynthesis; thiamine diphosphate biosynthesis; 4-methyl-5-(2-phosphoethyl)-thiazole from 5-(2-hydroxyethyl)-4-methylthiazole: step 1/1. Catalyzes the phosphorylation of the hydroxyl group of 4-methyl-5-beta-hydroxyethylthiazole (THZ). This chain is Hydroxyethylthiazole kinase, found in Exiguobacterium sp. (strain ATCC BAA-1283 / AT1b).